The following is a 503-amino-acid chain: Probable cytosol aminopeptidase (503 aa).

Residues lysine 271 and aspartate 276 each contribute to the Mn(2+) site. Lysine 283 is an active-site residue. Positions 294, 353, and 355 each coordinate Mn(2+). The active site involves arginine 357.

It belongs to the peptidase M17 family. The cofactor is Mn(2+).

It localises to the cytoplasm. It catalyses the reaction Release of an N-terminal amino acid, Xaa-|-Yaa-, in which Xaa is preferably Leu, but may be other amino acids including Pro although not Arg or Lys, and Yaa may be Pro. Amino acid amides and methyl esters are also readily hydrolyzed, but rates on arylamides are exceedingly low.. The enzyme catalyses Release of an N-terminal amino acid, preferentially leucine, but not glutamic or aspartic acids.. Presumably involved in the processing and regular turnover of intracellular proteins. Catalyzes the removal of unsubstituted N-terminal amino acids from various peptides. The polypeptide is Probable cytosol aminopeptidase (Chlorobium phaeobacteroides (strain DSM 266 / SMG 266 / 2430)).